The primary structure comprises 382 residues: Dual-specificity RNA methyltransferase RlmN (382 aa).

Catalysis depends on glutamate 94, which acts as the Proton acceptor. The region spanning 100–336 is the Radical SAM core domain; sequence EANRGTLCVS…NTITRKTRGD (237 aa). Residues cysteine 107 and cysteine 342 are joined by a disulfide bond. [4Fe-4S] cluster is bound by residues cysteine 114, cysteine 118, and cysteine 121. S-adenosyl-L-methionine-binding positions include 168–169, serine 200, 222–224, and asparagine 299; these read GE and SLH. Cysteine 342 functions as the S-methylcysteine intermediate in the catalytic mechanism.

Belongs to the radical SAM superfamily. RlmN family. [4Fe-4S] cluster is required as a cofactor.

The protein resides in the cytoplasm. It carries out the reaction adenosine(2503) in 23S rRNA + 2 reduced [2Fe-2S]-[ferredoxin] + 2 S-adenosyl-L-methionine = 2-methyladenosine(2503) in 23S rRNA + 5'-deoxyadenosine + L-methionine + 2 oxidized [2Fe-2S]-[ferredoxin] + S-adenosyl-L-homocysteine. It catalyses the reaction adenosine(37) in tRNA + 2 reduced [2Fe-2S]-[ferredoxin] + 2 S-adenosyl-L-methionine = 2-methyladenosine(37) in tRNA + 5'-deoxyadenosine + L-methionine + 2 oxidized [2Fe-2S]-[ferredoxin] + S-adenosyl-L-homocysteine. Specifically methylates position 2 of adenine 2503 in 23S rRNA and position 2 of adenine 37 in tRNAs. m2A2503 modification seems to play a crucial role in the proofreading step occurring at the peptidyl transferase center and thus would serve to optimize ribosomal fidelity. This is Dual-specificity RNA methyltransferase RlmN from Legionella pneumophila (strain Lens).